The chain runs to 520 residues: MGMRLSRRDKIARMLLIWAALAAVALVLVGCIRVVGGRARMAEPKLGQPVEWTPCRSSNPQVKIPGGALCGKLAVPVDYDRPDGDVAALALIRFPATGDKIGSLVINPGGPGESGIEAALGVFQTLPKRVHERFDLVGFDPRGVASSRPAIWCNSDADNDRLRAEPQVDYSREGVAHIENETKQFVGRCVDKMGKNFLAHVGTVNVAKDLDAIRAALGDDKLTYLGYSYGTRIGSAYAEEFPQRVRAMILDGAVDPNADPIEAELRQAKGFQDAFNNYAADCAKNAGCPLGADPAKAVEVYHSLVDPLVDPDNPRISRPARTKDPRGLSYSDAIVGTIMALYSPNLWQHLTDGLSELVDNRGDTLLALADMYMRRDSHGRYNNSGDARVAINCVDQPPVTDRDKVIDEDRRAREIAPFMSYGKFTGDAPLGTCAFWPVPPTSQPHAVSAPGLVPTVVVSTTHDPATPYKAGVDLANQLRGSLLTFDGTQHTVVFQGDSCIDEYVTAYLIGGTTPPSGAKC.

The signal sequence occupies residues 1 to 30 (MGMRLSRRDKIARMLLIWAALAAVALVLVG). Cys31 carries N-palmitoyl cysteine lipidation. Cys31 carries the S-diacylglycerol cysteine lipid modification. Positions 102-497 (GSLVINPGGP…TQHTVVFQGD (396 aa)) constitute an AB hydrolase-1 domain. The Nucleophile role is filled by Ser228. Asp463 is an active-site residue. His490 functions as the Proton donor in the catalytic mechanism.

This sequence belongs to the peptidase S33 family.

The protein resides in the cell envelope. The protein localises to the cell membrane. Its function is as follows. Serine protease that promotes pathogenesis by promoting the processing and the extracellular release of the M.bovis heat-shock protein GroEL2. Key immunomodulatory virulence factor, which promotes survival in host macrophages and modulates host immune responses. In Mycobacterium bovis (strain ATCC BAA-935 / AF2122/97), this protein is Serine protease Hip1.